We begin with the raw amino-acid sequence, 211 residues long: Beta-crystallin B3 (211 aa).

Methionine 1 is modified (N-acetylmethionine). N-acetylalanine; in Beta-crystallin B3, N-terminally processed is present on alanine 2. Residues alanine 2–serine 23 form an N-terminal arm region. Beta/gamma crystallin 'Greek key' domains follow at residues tyrosine 24–serine 63 and glycine 64–histidine 108. Positions isoleucine 109–aspartate 113 are connecting peptide. Beta/gamma crystallin 'Greek key' domains lie at histidine 114 to asparagine 155 and glycine 156 to arginine 198. The C-terminal arm stretch occupies residues glutamine 200–serine 211.

It belongs to the beta/gamma-crystallin family. As to quaternary structure, homo/heterodimer, or complexes of higher-order. The structure of beta-crystallin oligomers seems to be stabilized through interactions between the N-terminal arms.

In terms of biological role, crystallins are the dominant structural components of the vertebrate eye lens. The polypeptide is Beta-crystallin B3 (Crybb3) (Rattus norvegicus (Rat)).